Consider the following 345-residue polypeptide: D-erythrose-4-phosphate dehydrogenase (345 aa).

Residue 11–12 (RI) participates in NAD(+) binding. Residues 158 to 160 (SCT), Arg-204, 217 to 218 (TK), and Arg-240 each bind substrate. Cys-159 serves as the catalytic Nucleophile. Position 322 (Asn-322) interacts with NAD(+).

It belongs to the glyceraldehyde-3-phosphate dehydrogenase family. Epd subfamily. Homotetramer.

The protein localises to the cytoplasm. It catalyses the reaction D-erythrose 4-phosphate + NAD(+) + H2O = 4-phospho-D-erythronate + NADH + 2 H(+). The protein operates within cofactor biosynthesis; pyridoxine 5'-phosphate biosynthesis; pyridoxine 5'-phosphate from D-erythrose 4-phosphate: step 1/5. In terms of biological role, catalyzes the NAD-dependent conversion of D-erythrose 4-phosphate to 4-phosphoerythronate. This chain is D-erythrose-4-phosphate dehydrogenase, found in Vibrio campbellii (strain ATCC BAA-1116).